Consider the following 410-residue polypeptide: Glycylpeptide N-tetradecanoyltransferase (410 aa).

Tetradecanoyl-CoA is bound by residues phenylalanine 30, tryptophan 31, phenylalanine 162, leucine 163, cysteine 164, valine 165, serine 171, arginine 173, leucine 174, and alanine 175.

It belongs to the NMT family. In terms of assembly, heterodimer composed of NMT and AK2; AK2 myristoylation stabilizes the complex.

It is found in the cytoplasm. The enzyme catalyses N-terminal glycyl-[protein] + tetradecanoyl-CoA = N-tetradecanoylglycyl-[protein] + CoA + H(+). Its function is as follows. Adds a myristoyl group to the N-terminal glycine residue of certain cellular proteins. Myristoylates adenylate kinase AK2. During the asexual blood stage, may myristoylate proteins such as ARO, CDPK1 and GAP45. Probably by mediating protein myristoylation, plays a role in the assembly of the inner membrane complex during the early stages of schizogony and in the formation of rhoptries in the late stages and thus merozoite egress. This is Glycylpeptide N-tetradecanoyltransferase from Plasmodium falciparum (isolate 3D7).